The primary structure comprises 558 residues: Potassium-transporting ATPase potassium-binding subunit (558 aa).

12 consecutive transmembrane segments (helical) span residues 1–21 (MEII…SGYL), 66–86 (FNGF…WLFL), 127–147 (MIVM…VCIA), 166–186 (IVRF…ILLM), 245–265 (IWSN…MLFL), 281–301 (ALIL…LTMW), 327–347 (FGAG…TGSV), 354–374 (LTPL…VFGG), 377–397 (VGLM…SLMV), 416–436 (IVLV…LAFM), 482–502 (ISTG…QLMI), and 531–551 (IVFI…LGPI).

It belongs to the KdpA family. In terms of assembly, the system is composed of three essential subunits: KdpA, KdpB and KdpC.

It is found in the cell membrane. In terms of biological role, part of the high-affinity ATP-driven potassium transport (or Kdp) system, which catalyzes the hydrolysis of ATP coupled with the electrogenic transport of potassium into the cytoplasm. This subunit binds the extracellular potassium ions and delivers the ions to the membrane domain of KdpB through an intramembrane tunnel. In Staphylococcus aureus (strain MSSA476), this protein is Potassium-transporting ATPase potassium-binding subunit.